The following is a 71-amino-acid chain: uncharacterized protein (71 aa).

This is an uncharacterized protein from Vaccinia virus (strain Copenhagen) (VACV).